Reading from the N-terminus, the 332-residue chain is Ribosomal RNA small subunit methyltransferase C (332 aa).

This sequence belongs to the methyltransferase superfamily. RsmC family. In terms of assembly, monomer.

The protein localises to the cytoplasm. It catalyses the reaction guanosine(1207) in 16S rRNA + S-adenosyl-L-methionine = N(2)-methylguanosine(1207) in 16S rRNA + S-adenosyl-L-homocysteine + H(+). Specifically methylates the guanine in position 1207 of 16S rRNA in the 30S particle. This chain is Ribosomal RNA small subunit methyltransferase C, found in Pseudomonas putida (strain ATCC 700007 / DSM 6899 / JCM 31910 / BCRC 17059 / LMG 24140 / F1).